The sequence spans 978 residues: MTFHKTFGYGCIVLICFELLFAGVETSSENDDEYLTQKEIILEKSYHGLIRENETLVEITPLIKVNEEKICNFHILKKPYHEIPFKIELVNNLGILKARRTLNCENRKSYHFEICAIYCDGTPSNTANVHITVIDVNEYAPTFLEPSYVIEVDEGRLYNEILRVEASDKDCTPLFGDVCKYEILNNDEPFSIDNEGSIKNTEPLSHKASHNHILSVVAYDCAMKESAPIMVSIKVRRVCETKFVGMPERIDYTSGSTESLQLFPNARLDLCDISCKNEEDLRIHSSIALKTKHISFGCDRDISNCTSGQKVKDLLPHGAEWTKELSYDEGLEPIFHFDGSTGVVVPATVIDHYDFSSQPFSILTLFRHNSQVEINKHVKEHIVCSADDHKMNRHHMALFVRNCRLIFLLRKNFNEGDLNIFSPAEWRWKIPEVCDNEWHHYVLNVEDSSKVDLFIDGVRFENSIENRHSNPEVIDDWPLHAAHGVNTSLAIGACYQSLENRLKHGFNGDISEVKVSLNSVLTAEDIKCGTTCAEHLLAPKPLQSNNEKSYSDNSQIKENIEMNEIYISAKNKHDIEQFMRKVQYINTKQKPTVGRRNIEVLTTLNCKNESSLRLPPIETYIMVNEPIAPLGIDIDVVSASLETSDLTPPSYSPKIAISGTSNKLVSYQEIKLGVHILEKTCIDSVSKNNGKLEEKNHIDSCSVVVFPSLNPDHEDIKIDGDESLSSSMDIKTNINKDGVEMIGKDTISNYINVLRSLVYSNKKPAYYLNRVFKLSCAQQSSQYKSGEYTLTLTVLHPKQTLFKSTNVLPSSLSKVNFIGNTDNETSFHRNSGSVNGNDNNQPTESKVYSYSLLHTNNVQEPKSHIHSFIHKAEGSHVTMLIILVSVFLAVLLCGVSIARLKNNQKYIEHHQPCPKISDDGLIWDDSALTITINPMQADVTSDASSESENSESEDEEALKDGFTHINQLEWDNSNIFQQ.

The N-terminal stretch at 1–26 (MTFHKTFGYGCIVLICFELLFAGVET) is a signal peptide. The Extracellular segment spans residues 27-876 (SSENDDEYLT…SFIHKAEGSH (850 aa)). 2 Cadherin domains span residues 37–143 (QKEI…APTF) and 144–249 (LEPS…MPER). Residue Asn53 is glycosylated (N-linked (GlcNAc...) asparagine). N-linked (GlcNAc...) asparagine glycosylation is found at Asn304, Asn486, Asn608, and Asn823. A helical membrane pass occupies residues 877–897 (VTMLIILVSVFLAVLLCGVSI). Over 898-978 (ARLKNNQKYI…EWDNSNIFQQ (81 aa)) the chain is Cytoplasmic. Residues 937-958 (ADVTSDASSESENSESEDEEAL) form a disordered region. The span at 948–957 (ENSESEDEEA) shows a compositional bias: acidic residues.

The protein belongs to the calsyntenin family.

The protein localises to the postsynaptic cell membrane. In terms of biological role, postsynaptic adhesion molecule that binds to presynaptic neurexins to mediate both excitatory and inhibitory synapse formation. Promotes synapse development by acting as a cell adhesion molecule at the postsynaptic membrane, which associates with neurexin-alpha at the presynaptic membrane. This is Calsyntenin-1 (Cals) from Drosophila melanogaster (Fruit fly).